The sequence spans 1715 residues: Pentafunctional AROM polypeptide (1715 aa).

Positions 1 to 17 are enriched in polar residues; it reads MTSTASAQQPVLRTKTP. The segment at 1 to 26 is disordered; it reads MTSTASAQQPVLRTKTPSYHAPPSTD. The segment at 1–421 is 3-dehydroquinate synthase; that stretch reads MTSTASAQQP…VQNMASTVSD (421 aa). Residues 71–73, 112–115, 143–145, and Asp148 each bind NAD(+); these read DQN, EASK, and GGV. Arg159 serves as a coordination point for 7-phospho-2-dehydro-3-deoxy-D-arabino-heptonate. An NAD(+)-binding site is contributed by 168–169; it reads TT. 2 residues coordinate 7-phospho-2-dehydro-3-deoxy-D-arabino-heptonate: Asp175 and Lys181. Position 190 (Lys190) interacts with NAD(+). Asn191 lines the 7-phospho-2-dehydro-3-deoxy-D-arabino-heptonate pocket. NAD(+) contacts are provided by residues 208–211 and Asn219; that span reads WLKT. Zn(2+) is bound at residue Glu223. Residues 223 to 226 and Lys287 contribute to the 7-phospho-2-dehydro-3-deoxy-D-arabino-heptonate site; that span reads EVVK. Residue Glu297 is the Proton acceptor; for 3-dehydroquinate synthase activity of the active site. 7-phospho-2-dehydro-3-deoxy-D-arabino-heptonate contacts are provided by residues 301–305 and His308; that span reads RNLVN. His308 serves as a coordination point for Zn(2+). Residue His312 is the Proton acceptor; for 3-dehydroquinate synthase activity of the active site. 7-phospho-2-dehydro-3-deoxy-D-arabino-heptonate contacts are provided by His324 and Lys393. His324 contributes to the Zn(2+) binding site. Residues 434–895 are EPSP synthase; the sequence is VTPIHEQPNK…WDDLERKLGI (462 aa). The For EPSP synthase activity role is filled by Cys877. A shikimate kinase region spans residues 948–1165; that stretch reads HATIICIGMR…KGGRRTYFLS (218 aa). 955–962 provides a ligand contact to ATP; that stretch reads GMRASGKT. The tract at residues 1166 to 1389 is 3-dehydroquinase; the sequence is LTFPDVVPKL…AAPGQLSFRQ (224 aa). The Proton acceptor; for 3-dehydroquinate dehydratase activity role is filled by His1292. Residue Lys1320 is the Schiff-base intermediate with substrate; for 3-dehydroquinate dehydratase activity of the active site. Residues 1402–1715 are shikimate dehydrogenase; the sequence is ARRFALFGSP…AAWDVYLQRC (314 aa).

It in the N-terminal section; belongs to the sugar phosphate cyclases superfamily. Dehydroquinate synthase family. This sequence in the 2nd section; belongs to the EPSP synthase family. In the 3rd section; belongs to the shikimate kinase family. The protein in the 4th section; belongs to the type-I 3-dehydroquinase family. It in the C-terminal section; belongs to the shikimate dehydrogenase family. In terms of assembly, homodimer. Zn(2+) is required as a cofactor.

Its subcellular location is the cytoplasm. The enzyme catalyses 7-phospho-2-dehydro-3-deoxy-D-arabino-heptonate = 3-dehydroquinate + phosphate. The catalysed reaction is 3-dehydroquinate = 3-dehydroshikimate + H2O. It carries out the reaction shikimate + NADP(+) = 3-dehydroshikimate + NADPH + H(+). It catalyses the reaction shikimate + ATP = 3-phosphoshikimate + ADP + H(+). The enzyme catalyses 3-phosphoshikimate + phosphoenolpyruvate = 5-O-(1-carboxyvinyl)-3-phosphoshikimate + phosphate. It functions in the pathway metabolic intermediate biosynthesis; chorismate biosynthesis; chorismate from D-erythrose 4-phosphate and phosphoenolpyruvate: step 2/7. Its pathway is metabolic intermediate biosynthesis; chorismate biosynthesis; chorismate from D-erythrose 4-phosphate and phosphoenolpyruvate: step 3/7. The protein operates within metabolic intermediate biosynthesis; chorismate biosynthesis; chorismate from D-erythrose 4-phosphate and phosphoenolpyruvate: step 4/7. It participates in metabolic intermediate biosynthesis; chorismate biosynthesis; chorismate from D-erythrose 4-phosphate and phosphoenolpyruvate: step 5/7. It functions in the pathway metabolic intermediate biosynthesis; chorismate biosynthesis; chorismate from D-erythrose 4-phosphate and phosphoenolpyruvate: step 6/7. Functionally, the AROM polypeptide catalyzes 5 consecutive enzymatic reactions in prechorismate polyaromatic amino acid biosynthesis. This Mycosarcoma maydis (Corn smut fungus) protein is Pentafunctional AROM polypeptide.